Consider the following 156-residue polypeptide: Small ribosomal subunit protein uS7 (156 aa).

It belongs to the universal ribosomal protein uS7 family. Part of the 30S ribosomal subunit. Contacts proteins S9 and S11.

In terms of biological role, one of the primary rRNA binding proteins, it binds directly to 16S rRNA where it nucleates assembly of the head domain of the 30S subunit. Is located at the subunit interface close to the decoding center, probably blocks exit of the E-site tRNA. This Prochlorococcus marinus (strain NATL2A) protein is Small ribosomal subunit protein uS7.